The following is a 367-amino-acid chain: Peptide chain release factor 1 (367 aa).

Position 238 is an N5-methylglutamine (Gln238).

Belongs to the prokaryotic/mitochondrial release factor family. Methylated by PrmC. Methylation increases the termination efficiency of RF1.

The protein localises to the cytoplasm. Functionally, peptide chain release factor 1 directs the termination of translation in response to the peptide chain termination codons UAG and UAA. The sequence is that of Peptide chain release factor 1 from Dictyoglomus thermophilum (strain ATCC 35947 / DSM 3960 / H-6-12).